We begin with the raw amino-acid sequence, 126 residues long: SH2 domain-containing protein 1A (126 aa).

The SH2 domain occupies 6–104 (VYHGKISRET…VTPLQYPVEK (99 aa)). The segment at 67-92 (ETAPGVHKRFFRKVKNLISAFQKPDQ) is interaction with FYN SH3 domain. Position 89 is an N6-acetyllysine (lysine 89). A disordered region spans residues 100–126 (YPVEKSSGRGPQAPTGRRDSDICLNAP).

In terms of assembly, interacts with CD84, CD244, LY9, SLAMF1 and FYN. Interacts with NTRK1, NTRK2 and NTRK3. As to expression, T-cells.

It is found in the cytoplasm. Cytoplasmic adapter regulating receptors of the signaling lymphocytic activation molecule (SLAM) family such as SLAMF1, CD244, LY9, CD84, SLAMF6 and SLAMF7. In SLAM signaling seems to cooperate with SH2D1B/EAT-2. Initially it has been proposed that association with SLAMF1 prevents SLAMF1 binding to inhibitory effectors including INPP5D/SHIP1 and PTPN11/SHP-2. However, by simultaneous interactions, recruits FYN which subsequently phosphorylates and activates SLAMF1. Positively regulates CD244/2B4- and CD84-mediated natural killer (NK) cell functions. Can also promote CD48-, SLAMF6 -, LY9-, and SLAMF7-mediated NK cell activation. In the context of NK cell-mediated cytotoxicity enhances conjugate formation with target cells. May also regulate the activity of the neurotrophin receptors NTRK1, NTRK2 and NTRK3. The chain is SH2 domain-containing protein 1A (Sh2d1a) from Mus musculus (Mouse).